The sequence spans 367 residues: Phosphoribosylformylglycinamidine cyclo-ligase (367 aa).

It belongs to the AIR synthase family.

The protein localises to the cytoplasm. The enzyme catalyses 2-formamido-N(1)-(5-O-phospho-beta-D-ribosyl)acetamidine + ATP = 5-amino-1-(5-phospho-beta-D-ribosyl)imidazole + ADP + phosphate + H(+). The protein operates within purine metabolism; IMP biosynthesis via de novo pathway; 5-amino-1-(5-phospho-D-ribosyl)imidazole from N(2)-formyl-N(1)-(5-phospho-D-ribosyl)glycinamide: step 2/2. The chain is Phosphoribosylformylglycinamidine cyclo-ligase from Cyanothece sp. (strain PCC 7425 / ATCC 29141).